The primary structure comprises 181 residues: Large ribosomal subunit protein uL5 (181 aa).

The protein belongs to the universal ribosomal protein uL5 family. Part of the 50S ribosomal subunit; part of the 5S rRNA/L5/L18/L25 subcomplex. Contacts the 5S rRNA and the P site tRNA. Forms a bridge to the 30S subunit in the 70S ribosome.

This is one of the proteins that bind and probably mediate the attachment of the 5S RNA into the large ribosomal subunit, where it forms part of the central protuberance. In the 70S ribosome it contacts protein S13 of the 30S subunit (bridge B1b), connecting the 2 subunits; this bridge is implicated in subunit movement. Contacts the P site tRNA; the 5S rRNA and some of its associated proteins might help stabilize positioning of ribosome-bound tRNAs. The protein is Large ribosomal subunit protein uL5 of Acaryochloris marina (strain MBIC 11017).